The following is a 243-amino-acid chain: Probable HTH-type transcriptional regulator GfsR (243 aa).

Residues 154 to 179 (AAVARPDTSGSATGRTGDSSPSLALS) are disordered. Positions 161-178 (TSGSATGRTGDSSPSLAL) are enriched in polar residues. In terms of domain architecture, HTH luxR-type spans 171–236 (DSSPSLALSP…QALLRWLGHP (66 aa)). Residues 195-214 (VREIAVEMRLAEKTVRNYLS) constitute a DNA-binding region (H-T-H motif).

It functions in the pathway antibiotic biosynthesis. Functionally, probable DNA-binding protein that contributes to the control of expression of the biosynthesis operon of the 16-membered macrolide antibiotics FD-891 and FD-892. Might be a member of a two-component regulatory system; the putative sensor kinase gene is unknown. The chain is Probable HTH-type transcriptional regulator GfsR from Streptomyces halstedii.